The primary structure comprises 311 residues: Pyrimidine-specific ribonucleoside hydrolase RihA (311 aa).

Residue His-240 is part of the active site.

Belongs to the IUNH family. RihA subfamily.

Hydrolyzes with equal efficiency cytidine or uridine to ribose and cytosine or uracil, respectively. In Escherichia coli O127:H6 (strain E2348/69 / EPEC), this protein is Pyrimidine-specific ribonucleoside hydrolase RihA.